The sequence spans 534 residues: NAD(P)H-quinone oxidoreductase chain 4 1 (534 aa).

14 consecutive transmembrane segments (helical) span residues 6–26 (IPWL…IPLI), 34–54 (IRWY…TAFW), 87–107 (LSMP…LAAW), 113–133 (PKLF…VFAV), 136–156 (LLLF…LISI), 169–189 (FILY…ALAF), 209–229 (ALEL…LPIF), 243–263 (SAPV…YGLI), 277–297 (FAPL…LTAF), 311–331 (ISHM…GMNG), 332–352 (AVLQ…LSGV), 376–396 (FAMF…SGFV), 418–438 (IAIF…LSML), and 464–484 (IFVA…PKLA).

This sequence belongs to the complex I subunit 4 family.

The protein resides in the cellular thylakoid membrane. The catalysed reaction is a plastoquinone + NADH + (n+1) H(+)(in) = a plastoquinol + NAD(+) + n H(+)(out). The enzyme catalyses a plastoquinone + NADPH + (n+1) H(+)(in) = a plastoquinol + NADP(+) + n H(+)(out). NDH-1 shuttles electrons from NAD(P)H, via FMN and iron-sulfur (Fe-S) centers, to quinones in the respiratory chain. The immediate electron acceptor for the enzyme in this species is believed to be plastoquinone. Couples the redox reaction to proton translocation (for every two electrons transferred, four hydrogen ions are translocated across the cytoplasmic membrane), and thus conserves the redox energy in a proton gradient. The protein is NAD(P)H-quinone oxidoreductase chain 4 1 of Picosynechococcus sp. (strain ATCC 27264 / PCC 7002 / PR-6) (Agmenellum quadruplicatum).